A 119-amino-acid polypeptide reads, in one-letter code: MIGIDIVSIARIEKCVKRFEMRFLERFLSPSEIVLCKDKSSSIAGFFALKEACSKALQVGIGKELSFLDMRISKSPKNAPLITLSKEKMDYFNIQSLSASISHDAGFAIAVVMVSSSNL.

Positions 5 and 51 each coordinate Mg(2+).

It belongs to the P-Pant transferase superfamily. AcpS family. Mg(2+) serves as cofactor.

Its subcellular location is the cytoplasm. The enzyme catalyses apo-[ACP] + CoA = holo-[ACP] + adenosine 3',5'-bisphosphate + H(+). Functionally, transfers the 4'-phosphopantetheine moiety from coenzyme A to a Ser of acyl-carrier-protein. The protein is Holo-[acyl-carrier-protein] synthase of Helicobacter pylori (strain J99 / ATCC 700824) (Campylobacter pylori J99).